The sequence spans 250 residues: Peptidyl-tRNA hydrolase (250 aa).

A tRNA-binding site is contributed by tyrosine 14. Histidine 19 acts as the Proton acceptor in catalysis. Residues phenylalanine 64, asparagine 66, and asparagine 112 each contribute to the tRNA site. The disordered stretch occupies residues 192-250 (MGDGNQRPGGVKTDPAQLEKAPPKAQSHIRQARQNQKKPNIPESGPMAEMLKKLLGKKD). Polar residues predominate over residues 219–229 (HIRQARQNQKK). Residues 241-250 (MLKKLLGKKD) are compositionally biased toward basic and acidic residues.

This sequence belongs to the PTH family. As to quaternary structure, monomer.

The protein localises to the cytoplasm. The enzyme catalyses an N-acyl-L-alpha-aminoacyl-tRNA + H2O = an N-acyl-L-amino acid + a tRNA + H(+). Functionally, hydrolyzes ribosome-free peptidyl-tRNAs (with 1 or more amino acids incorporated), which drop off the ribosome during protein synthesis, or as a result of ribosome stalling. Its function is as follows. Catalyzes the release of premature peptidyl moieties from peptidyl-tRNA molecules trapped in stalled 50S ribosomal subunits, and thus maintains levels of free tRNAs and 50S ribosomes. The chain is Peptidyl-tRNA hydrolase from Brucella abortus (strain 2308).